The following is a 517-amino-acid chain: DNA relaxase MbeA (517 aa).

Tyr19 (O-(5'-phospho-DNA)-tyrosine intermediate) is an active-site residue. A divalent metal cation-binding residues include His97, Glu104, and Asn106. 3 disordered regions span residues Tyr281–Arg310, Pro380–Ser405, and Ser496–Trp517. Over residues Gly297–Arg310 the composition is skewed to basic and acidic residues. Residues Ser496–Leu510 are compositionally biased toward basic and acidic residues.

To E.coli MbaA and MbkA. Interacts with MbeB and MbeC to form the relaxosome. The cofactor is Mn(2+). It depends on Co(2+) as a cofactor. Ni(2+) serves as cofactor.

It carries out the reaction ATP-independent breakage of single-stranded DNA, followed by passage and rejoining.. Its function is as follows. Relaxase involved in plasmid ColE1 conjugative mobilization and is thus essential to promote the specific transfer of the plasmid during conjugation. First catalyzes the specific cleavage of one of the DNA strands at oriT, forming a covalent 5'-phosphotyrosine intermediate. The nic site corresponds to 5'-(1469)CTGG/CTTA(1462)-3' in the cleaved strand. The cleaved strand is then transferred through the dedicated type IV secretion apparatus. MbeA remains covalently linked at the 5' end of the strand, and once in the recipient cell, it probably catalyzes the rejoining of the two ends of the strand, re-forming the circular plasmid DNA. Is functional in vitro without a requirement for the conjugative accessory proteins. The chain is DNA relaxase MbeA (mbeA) from Escherichia coli.